The sequence spans 300 residues: Ubiquinone biosynthesis protein COQ4, mitochondrial (300 aa).

Zn(2+) contacts are provided by His-173, Asp-174, His-177, and Glu-189.

It belongs to the COQ4 family. Component of a multi-subunit COQ enzyme complex, composed of at least COQ3, COQ4, COQ5, COQ6, COQ7 and COQ9. Requires Zn(2+) as cofactor.

It localises to the mitochondrion inner membrane. It catalyses the reaction a 4-hydroxy-3-methoxy-5-(all-trans-polyprenyl)benzoate + H(+) = a 2-methoxy-6-(all-trans-polyprenyl)phenol + CO2. It functions in the pathway cofactor biosynthesis; ubiquinone biosynthesis. Lyase that catalyzes the C1-decarboxylation of 4-hydroxy-3-methoxy-5-(all-trans-polyprenyl)benzoic acid into 2-methoxy-6-(all-trans-polyprenyl)phenol during ubiquinone biosynthesis. This is Ubiquinone biosynthesis protein COQ4, mitochondrial from Cryptococcus neoformans var. neoformans serotype D (strain JEC21 / ATCC MYA-565) (Filobasidiella neoformans).